Here is a 482-residue protein sequence, read N- to C-terminus: UDP-N-acetylmuramate--L-alanine ligase (482 aa).

Position 123 to 129 (123 to 129) interacts with ATP; it reads GTHGKTT.

It belongs to the MurCDEF family.

The protein localises to the cytoplasm. It carries out the reaction UDP-N-acetyl-alpha-D-muramate + L-alanine + ATP = UDP-N-acetyl-alpha-D-muramoyl-L-alanine + ADP + phosphate + H(+). The protein operates within cell wall biogenesis; peptidoglycan biosynthesis. Functionally, cell wall formation. This chain is UDP-N-acetylmuramate--L-alanine ligase, found in Pseudomonas entomophila (strain L48).